A 364-amino-acid chain; its full sequence is Peptide chain release factor 1 (364 aa).

Q237 carries the N5-methylglutamine modification.

Belongs to the prokaryotic/mitochondrial release factor family. In terms of processing, methylated by PrmC. Methylation increases the termination efficiency of RF1.

The protein localises to the cytoplasm. Its function is as follows. Peptide chain release factor 1 directs the termination of translation in response to the peptide chain termination codons UAG and UAA. This is Peptide chain release factor 1 from Mycoplasma mycoides subsp. mycoides SC (strain CCUG 32753 / NCTC 10114 / PG1).